The chain runs to 246 residues: Pyridoxine 5'-phosphate synthase (246 aa).

Residues N8 and R19 each coordinate 3-amino-2-oxopropyl phosphate. Catalysis depends on H44, which acts as the Proton acceptor. Residues R46 and H51 each contribute to the 1-deoxy-D-xylulose 5-phosphate site. Residue E76 is the Proton acceptor of the active site. Residue T106 coordinates 1-deoxy-D-xylulose 5-phosphate. The active-site Proton donor is the H198. 3-amino-2-oxopropyl phosphate contacts are provided by residues D199 and 221 to 222; that span reads GH.

It belongs to the PNP synthase family. As to quaternary structure, homooctamer; tetramer of dimers.

Its subcellular location is the cytoplasm. The enzyme catalyses 3-amino-2-oxopropyl phosphate + 1-deoxy-D-xylulose 5-phosphate = pyridoxine 5'-phosphate + phosphate + 2 H2O + H(+). The protein operates within cofactor biosynthesis; pyridoxine 5'-phosphate biosynthesis; pyridoxine 5'-phosphate from D-erythrose 4-phosphate: step 5/5. Its function is as follows. Catalyzes the complicated ring closure reaction between the two acyclic compounds 1-deoxy-D-xylulose-5-phosphate (DXP) and 3-amino-2-oxopropyl phosphate (1-amino-acetone-3-phosphate or AAP) to form pyridoxine 5'-phosphate (PNP) and inorganic phosphate. The polypeptide is Pyridoxine 5'-phosphate synthase (Mesorhizobium japonicum (strain LMG 29417 / CECT 9101 / MAFF 303099) (Mesorhizobium loti (strain MAFF 303099))).